A 560-amino-acid polypeptide reads, in one-letter code: Membrane protein insertase YidC (560 aa).

A run of 6 helical transmembrane segments spans residues 7 to 27 (NLIAAIVLSLSIIFGWQYFVV), 334 to 354 (AIDFGWFYIITKPVFYAMNFF), 357 to 377 (YVGNFGISILIVTVIIKLLMF), 431 to 451 (LPILVQIPVFFSIYKVLYVTI), 476 to 496 (LFGFLPFSPPSFLMIGAWPIL), and 522 to 542 (FMPLIFLVMFSSFPVGLLIYW).

It belongs to the OXA1/ALB3/YidC family. Type 1 subfamily. Interacts with the Sec translocase complex via SecD. Specifically interacts with transmembrane segments of nascent integral membrane proteins during membrane integration.

Its subcellular location is the cell inner membrane. Functionally, required for the insertion and/or proper folding and/or complex formation of integral membrane proteins into the membrane. Involved in integration of membrane proteins that insert both dependently and independently of the Sec translocase complex, as well as at least some lipoproteins. Aids folding of multispanning membrane proteins. The chain is Membrane protein insertase YidC from Rickettsia canadensis (strain McKiel).